A 395-amino-acid polypeptide reads, in one-letter code: Flap endonuclease 1 (395 aa).

The N-domain stretch occupies residues 1-104 (MGIKQLFQII…GELAKRFQRK (104 aa)). Asp-34 is a binding site for Mg(2+). 2 residues coordinate DNA: Arg-47 and Arg-70. The Mg(2+) site is built by Asp-86, Glu-158, Glu-160, Asp-179, and Asp-181. The I-domain stretch occupies residues 122–253 (DIEKFSRRTV…TTALKLIRDH (132 aa)). Position 158 (Glu-158) interacts with DNA. Residues Gly-231 and Asp-233 each contribute to the DNA site. Asp-233 lines the Mg(2+) pocket. Positions 341 to 349 (QQARLEGFF) are interaction with PCNA. Residues 344–395 (RLEGFFKPVPKTDAQKAAHKRKLEEKNEEKKKKLKQEKKDKAAAKSKPRGAA) form a disordered region. Residues 365-386 (KLEEKNEEKKKKLKQEKKDKAA) are compositionally biased toward basic and acidic residues.

The protein belongs to the XPG/RAD2 endonuclease family. FEN1 subfamily. In terms of assembly, interacts with PCNA. Three molecules of FEN1 bind to one PCNA trimer with each molecule binding to one PCNA monomer. PCNA stimulates the nuclease activity without altering cleavage specificity. It depends on Mg(2+) as a cofactor. Post-translationally, phosphorylated. Phosphorylation upon DNA damage induces relocalization to the nuclear plasma.

The protein resides in the nucleus. The protein localises to the nucleolus. It localises to the nucleoplasm. Its subcellular location is the mitochondrion. Its function is as follows. Structure-specific nuclease with 5'-flap endonuclease and 5'-3' exonuclease activities involved in DNA replication and repair. During DNA replication, cleaves the 5'-overhanging flap structure that is generated by displacement synthesis when DNA polymerase encounters the 5'-end of a downstream Okazaki fragment. It enters the flap from the 5'-end and then tracks to cleave the flap base, leaving a nick for ligation. Also involved in the long patch base excision repair (LP-BER) pathway, by cleaving within the apurinic/apyrimidinic (AP) site-terminated flap. Acts as a genome stabilization factor that prevents flaps from equilibrating into structures that lead to duplications and deletions. Also possesses 5'-3' exonuclease activity on nicked or gapped double-stranded DNA, and exhibits RNase H activity. Also involved in replication and repair of rDNA and in repairing mitochondrial DNA. This is Flap endonuclease 1 from Fusarium vanettenii (strain ATCC MYA-4622 / CBS 123669 / FGSC 9596 / NRRL 45880 / 77-13-4) (Fusarium solani subsp. pisi).